Reading from the N-terminus, the 473-residue chain is Photosystem II CP43 reaction center protein (473 aa).

A propeptide spanning residues 1–14 (MKTLYSLRRSYPVE) is cleaved from the precursor. Thr15 carries the post-translational modification N-acetylthreonine. A Phosphothreonine modification is found at Thr15. A run of 5 helical transmembrane segments spans residues 69–93 (LFEV…PHLA), 134–155 (LIGP…KDRN), 178–200 (KALY…RKIT), 255–275 (KPFA…LSYS), and 291–312 (WFNN…ASQA). Glu367 lines the [CaMn4O5] cluster pocket. A helical membrane pass occupies residues 447 to 471 (RARAAAAGFEKGIDRDFEPVLSMTP).

It belongs to the PsbB/PsbC family. PsbC subfamily. PSII is composed of 1 copy each of membrane proteins PsbA, PsbB, PsbC, PsbD, PsbE, PsbF, PsbH, PsbI, PsbJ, PsbK, PsbL, PsbM, PsbT, PsbX, PsbY, PsbZ, Psb30/Ycf12, at least 3 peripheral proteins of the oxygen-evolving complex and a large number of cofactors. It forms dimeric complexes. The cofactor is Binds multiple chlorophylls and provides some of the ligands for the Ca-4Mn-5O cluster of the oxygen-evolving complex. It may also provide a ligand for a Cl- that is required for oxygen evolution. PSII binds additional chlorophylls, carotenoids and specific lipids..

It is found in the plastid. Its subcellular location is the chloroplast thylakoid membrane. One of the components of the core complex of photosystem II (PSII). It binds chlorophyll and helps catalyze the primary light-induced photochemical processes of PSII. PSII is a light-driven water:plastoquinone oxidoreductase, using light energy to abstract electrons from H(2)O, generating O(2) and a proton gradient subsequently used for ATP formation. The polypeptide is Photosystem II CP43 reaction center protein (Pinus thunbergii (Japanese black pine)).